Consider the following 380-residue polypeptide: Magnesium-protoporphyrin IX monomethyl ester [oxidative] cyclase 1 (380 aa).

The protein belongs to the AcsF family. Requires Fe cation as cofactor.

It carries out the reaction Mg-protoporphyrin IX 13-monomethyl ester + 3 NADPH + 3 O2 + 2 H(+) = 3,8-divinyl protochlorophyllide a + 3 NADP(+) + 5 H2O. It functions in the pathway porphyrin-containing compound metabolism; chlorophyll biosynthesis (light-independent). Catalyzes the formation of the isocyclic ring in chlorophyll biosynthesis. Mediates the cyclase reaction, which results in the formation of divinylprotochlorophyllide (Pchlide) characteristic of all chlorophylls from magnesium-protoporphyrin IX 13-monomethyl ester (MgPMME). The protein is Magnesium-protoporphyrin IX monomethyl ester [oxidative] cyclase 1 of Thermosynechococcus vestitus (strain NIES-2133 / IAM M-273 / BP-1).